The primary structure comprises 391 residues: S-adenosylmethionine synthase 5 (391 aa).

Residue Glu-9 participates in Mg(2+) binding. ATP is bound at residue His-15. Glu-43 contributes to the K(+) binding site. Glu-56 and Gln-99 together coordinate L-methionine. ATP-binding positions include 167–169, 235–238, Asp-246, 252–253, Ala-269, Lys-273, and Lys-277; these read DGK, SGRF, and RK. Asp-246 contacts L-methionine. Residue Lys-277 coordinates L-methionine.

The protein belongs to the AdoMet synthase family. In terms of assembly, homotetramer. It depends on Mn(2+) as a cofactor. Mg(2+) serves as cofactor. The cofactor is Co(2+). K(+) is required as a cofactor.

Its subcellular location is the cytoplasm. The enzyme catalyses L-methionine + ATP + H2O = S-adenosyl-L-methionine + phosphate + diphosphate. It participates in amino-acid biosynthesis; S-adenosyl-L-methionine biosynthesis; S-adenosyl-L-methionine from L-methionine: step 1/1. Catalyzes the formation of S-adenosylmethionine from methionine and ATP. The reaction comprises two steps that are both catalyzed by the same enzyme: formation of S-adenosylmethionine (AdoMet) and triphosphate, and subsequent hydrolysis of the triphosphate. The chain is S-adenosylmethionine synthase 5 (METK5) from Vitis vinifera (Grape).